Reading from the N-terminus, the 1069-residue chain is Protocadherin-7 (1069 aa).

The N-terminal stretch at 1-28 (MLRMRTAGWARGWCLGCCLLLPLSLSLA) is a signal peptide. 7 consecutive Cadherin domains span residues 29-143 (AAKQ…TPTF), 144-308 (PSPV…SPRF), 309-415 (EKSV…VPSI), 424-535 (PLKD…PPMF), 536-639 (GQSV…DPKF), 640-742 (MQDV…APTV), and 745-862 (PKNI…IPLT). Residues 29–879 (AAKQLLRYRL…SYEISKQRLS (851 aa)) lie on the Extracellular side of the membrane. N-linked (GlcNAc...) asparagine glycosylation occurs at asparagine 79. The segment at 182–242 (LLQEPGGGGS…GGTNPGGRSS (61 aa)) is disordered. Over residues 207–221 (PGGGGNGASGGGSGG) the composition is skewed to gly residues. Residues asparagine 689, asparagine 747, asparagine 780, asparagine 822, asparagine 840, and asparagine 845 are each glycosylated (N-linked (GlcNAc...) asparagine). A helical membrane pass occupies residues 880 to 900 (IVIGVVAGIMTVILIILIVVM). Residues 901-1069 (ARYCRSKNKN…RLHPYITVFG (169 aa)) are Cytoplasmic-facing. The disordered stretch occupies residues 910 to 988 (NGYEAGKKDH…RYRSVNGGPG (79 aa)). Residues 930 to 944 (KSKKPKKDKKNKKSK) are compositionally biased toward basic residues. Phosphoserine occurs at positions 989 and 1011.

As to expression, expressed predominantly in brain and heart and at lower levels in various other tissues.

The protein localises to the cell membrane. This chain is Protocadherin-7 (PCDH7), found in Homo sapiens (Human).